The primary structure comprises 275 residues: Low affinity immunoglobulin gamma Fc region receptor III-A (275 aa).

A signal peptide spans 1-23 (MSVWTSRKAAEDNDTSLSSGIRA). Residues 24-207 (GLQKAVVTLH…SPSTFPPWHQ (184 aa)) are Extracellular-facing. 2 Ig-like C2-type domains span residues 28 to 92 (AVVT…YTCQ) and 101 to 192 (PVNL…LRIT). 2 disulfide bridges follow: cysteine 49-cysteine 91 and cysteine 131-cysteine 175. 3 N-linked (GlcNAc...) asparagine glycosylation sites follow: asparagine 65, asparagine 168, and asparagine 183. The helical transmembrane segment at 208-228 (ITFCLLIGLLFTIDTVMYFSV) threads the bilayer. Over 229-275 (QKGLRRSTADYEEPEVHWSKEPENKTISEEKQSFRSSRANSETPENR) the chain is Cytoplasmic. The interval 237-275 (ADYEEPEVHWSKEPENKTISEEKQSFRSSRANSETPENR) is disordered. Residue tyrosine 239 is modified to Phosphotyrosine. Residues 242–261 (PEVHWSKEPENKTISEEKQS) are compositionally biased toward basic and acidic residues. Residues 262–275 (FRSSRANSETPENR) are compositionally biased toward polar residues.

In terms of assembly, forms a heterooligomeric complex with ITAM-containing signaling subunits FCER1G. Interacts (via transmembrane domain) with signaling subunits; this interaction is a prerequisite for receptor complex expression on the cell surface and intracellular signal transduction. Binds the Fc region of antigen-complexed IgG. N-glycosylated. In terms of processing, phosphorylated following receptor ligation.

It is found in the cell membrane. In terms of biological role, receptor for the invariable Fc fragment of immunoglobulin gamma (IgG). Binds with intermediate affinity to both IgG2a and IgG2b. Can bind to IgG2a and IgG2b monomers. Does not display binding to IgG1 or IgG3. Recognizes neutralizing virus-specific IgGs displayed on the cell surface of infected cells and triggers antibody-dependent cellular cytotoxicity (ADCC). Confers protection to lethal influenza virus infection. On splenic dendritic cells, uptakes antigen immune complexes and efficiently divert them into MHC class I and II antigen presentation pathways to provide for superior priming of CD4-positive and CD8-positive T cell immune responses. Mediates neutrophil activation by IgG complexes redundantly with FCGR2A. Plays a role in promoting bone resorption by enhancing osteoclast differentiation following binding to IgG2a. Also acts as a receptor for the Fc region of immunoglobulin epsilon (IgE). Binds with low affinity to both the a and b allotypes of IgE. Has also been shown to bind to IgE allotype a only but not to allotype b. Binds aggregated IgE but not the monomeric form and bound monomeric IgG is readily displaced by IgE complexes. Binding to IgE promotes macrophage-mediated phagocytosis, antigen presentation to T cells, production of pro-inflammatory cytokines and the late phase of cutaneous allergic reactions. Mediates enhanced ADCC in response to afucosylated IgGs. The polypeptide is Low affinity immunoglobulin gamma Fc region receptor III-A (Cricetulus griseus (Chinese hamster)).